Here is a 546-residue protein sequence, read N- to C-terminus: Casein kinase I homolog 2 (546 aa).

Polar residues-rich tracts occupy residues 1–33 (MSQVQSPLTATNSGLAVNNNTMNSQMPNRSNVR) and 44–55 (HVSSNLNHNTGN). Positions 1-67 (MSQVQSPLTA…ASYSGSQSRD (67 aa)) are disordered. An N-acetylserine modification is found at Ser-2. The Protein kinase domain occupies 76–360 (YKIGKKIGEG…ETADGQYDWM (285 aa)). Residues 82 to 90 (IGEGSFGVL) and Lys-105 each bind ATP. The active-site Proton acceptor is Asp-195. 2 disordered regions span residues 373–425 (NKKP…QAQA) and 443–546 (QQAN…LGCC). The segment covering 412 to 425 (QQQQQQQAQAQAQA) has biased composition (low complexity). A compositionally biased stretch (basic and acidic residues) spans 453–465 (DDSHYDEEREASK). At Ser-455 the chain carries Phosphoserine. A Glycyl lysine isopeptide (Lys-Gly) (interchain with G-Cter in ubiquitin) cross-link involves residue Lys-465. The segment covering 475 to 496 (QQQTQQKYAQQQQKQMQQKSKQ) has biased composition (low complexity). A compositionally biased stretch (polar residues) spans 497-530 (FANTGANGQTNKYPYNAQPTANDEQNAKNAAQDR). Positions 533-546 (NKSSKGFFSKLGCC) are enriched in low complexity. Residues Cys-545 and Cys-546 are each lipidated (S-palmitoyl cysteine).

The protein belongs to the protein kinase superfamily. CK1 Ser/Thr protein kinase family. Casein kinase I subfamily. Palmitoylated by AKR1, which is required for proper plasma membrane localization of YCK2.

Its subcellular location is the cell membrane. The catalysed reaction is L-seryl-[protein] + ATP = O-phospho-L-seryl-[protein] + ADP + H(+). It carries out the reaction L-threonyl-[protein] + ATP = O-phospho-L-threonyl-[protein] + ADP + H(+). Functionally, casein kinases are operationally defined by their preferential utilization of acidic proteins such as caseins as substrates. In Saccharomyces cerevisiae (strain ATCC 204508 / S288c) (Baker's yeast), this protein is Casein kinase I homolog 2 (YCK2).